Here is a 58-residue protein sequence, read N- to C-terminus: Small ribosomal subunit protein bS21 (58 aa).

A disordered region spans residues 27-58 (GTLQELRKREHYEKPSVKRKRKSEAARKRKKY). Positions 31-42 (ELRKREHYEKPS) are enriched in basic and acidic residues. Positions 43-58 (VKRKRKSEAARKRKKY) are enriched in basic residues.

The protein belongs to the bacterial ribosomal protein bS21 family.

The sequence is that of Small ribosomal subunit protein bS21 (rpsU) from Lactococcus lactis subsp. lactis (strain IL1403) (Streptococcus lactis).